We begin with the raw amino-acid sequence, 138 residues long: Small ribosomal subunit protein uS11B (138 aa).

Residues 118 to 138 (DVTPVPSDSTRKKGGRRGRRL) form a disordered region. Basic residues predominate over residues 129–138 (KKGGRRGRRL).

The protein belongs to the universal ribosomal protein uS11 family. Component of the small ribosomal subunit (SSU). Mature yeast ribosomes consist of a small (40S) and a large (60S) subunit. The 40S small subunit contains 1 molecule of ribosomal RNA (18S rRNA) and 33 different proteins (encoded by 57 genes). The large 60S subunit contains 3 rRNA molecules (25S, 5.8S and 5S rRNA) and 46 different proteins (encoded by 81 genes). uS11 interacts with eS1 forming part of the mRNA exit tunnel. uS11 interacts with snoRNA U3. uS11 interacts with MPP10. Component of the ribosomal small subunit (SSU) processome composed of at least 40 protein subunits and snoRNA U3.

Its subcellular location is the cytoplasm. The protein localises to the nucleus. It is found in the nucleolus. Functionally, component of the ribosome, a large ribonucleoprotein complex responsible for the synthesis of proteins in the cell. The small ribosomal subunit (SSU) binds messenger RNAs (mRNAs) and translates the encoded message by selecting cognate aminoacyl-transfer RNA (tRNA) molecules. The large subunit (LSU) contains the ribosomal catalytic site termed the peptidyl transferase center (PTC), which catalyzes the formation of peptide bonds, thereby polymerizing the amino acids delivered by tRNAs into a polypeptide chain. The nascent polypeptides leave the ribosome through a tunnel in the LSU and interact with protein factors that function in enzymatic processing, targeting, and the membrane insertion of nascent chains at the exit of the ribosomal tunnel. uS11 is involved in nucleolar processing of pre-18S ribosomal RNA and ribosome assembly. The polypeptide is Small ribosomal subunit protein uS11B (Saccharomyces cerevisiae (strain ATCC 204508 / S288c) (Baker's yeast)).